Here is a 1282-residue protein sequence, read N- to C-terminus: MEAKDQKKHRKKNSGPKAAKKKKRLLQDLQLGDEEDARKRNPKAFAVQSAVRMARSFHRTQDLKTKKHHIPVVDRTPLEPPPIVVVVMGPPKVGKSTLIQCLIRNFTRQKLTEIRGPVTIVSGKKRRLTIIECGCDINMMIDLAKVADLVLMLIDASFGFEMETFEFLNICQVHGFPKIMGVLTHLDSFKHNKQLKKTKKRLKHRFWTEVYPGAKLFYLSGMVHGEYQNQEIHNLGRFITVMKFRPLTWQTSHPYILADRMEDLTNPEDIRTNIKCDRKVSLYGYLRGAHLKNKSQIHMPGVGDFAVSDISFLPDPCALPEQQKKRCLNEKEKLVYAPLSGVGGVLYDKDAVYVDLGGSHVFQDEVGPTHELVQSLISTHSTIDAKMASSRVTLFSDSKPLGSEDIDNQGLMMPKEEKQMDLNTGRMRRKAIFGDEDESGDSDDEEDDEMSEDDGLENGSSDEEAEEEENAEMTDQYMAVKGIKRRKLELEEDSEMDLPAFADSDDDLERSSAEEGEAEEADESSEEEDCTAGEKGISGSKAAGEGSKAGLSPANCQSDRVNLEKSLLMKKAALPTFDSGHCTAEEVFASEDESEESSSLSAEEEDSENEEAIRKKLSKPSQVSSGQKLGPQNFIDETSDIENLLKEEEDYKEENNDSKETSGALKWKEDLSRKAAEAFLRQQQAAPNLRKLIYGTVTEDNEEEDDDTLEELGGLFRVNQPDRECKHKADSLDCSRFLVEAPHDWDLEEVMNSIRDCFVTGKWEDDKDAAKVLAEDEELYGDFEDLETGDVHKGKSGPNTQNEDIEKEVKEEIDPDEEESAKKKHLDKKRKLKEMFDAEYDEGESTYFDDLKGEMQKQAQLNRAEFEDQDDEARVQYEGFRPGMYVRIEIENVPCEFVQNFDPHYPIILGGLGNSEGNVGYVQMRLKKHRWYKKILKSRDPIIFSVGWRRFQTIPLYYIEDHNGRQRLLKYTPQHMHCGAAFWGPITPQGTGFLAIQSVSGIMPDFRIAATGVVLDLDKSIKIVKKLKLTGFPYKIFKNTSFIKGMFNSALEVAKFEGAVIRTVSGIRGQIKKALRAPEGAFRASFEDKLLMSDIVFMRTWYPVSIPAFYNPVTSLLKPVGEKDTWSGMRTTGQLRLAHGVRLKANKDSLYKPILRQKKHFNSLHIPKALQKALPFKNKPKTQAKAGKVPKDRRRPAVIREPHERKILALLDALSTVHSQKMKKAKEQRHLHNKEHFRAKQKEEEEKLKRQKDLRKKLFRIQGQKERRNQKSSLKGAEGQLQ.

Basic residues predominate over residues 1-24 (MEAKDQKKHRKKNSGPKAAKKKKR). Residues 1-43 (MEAKDQKKHRKKNSGPKAAKKKKRLLQDLQLGDEEDARKRNPK) form a disordered region. K43 participates in a covalent cross-link: Glycyl lysine isopeptide (Lys-Gly) (interchain with G-Cter in SUMO2). The Bms1-type G domain maps to 80–245 (PPPIVVVVMG…GRFITVMKFR (166 aa)). The tract at residues 89-96 (GPPKVGKS) is G1. 89 to 96 (GPPKVGKS) is a binding site for ATP. Positions 117 to 121 (PVTIV) are G2. The interval 132-135 (ECGC) is G3. Residues 184–187 (THLD) form a G4 region. Phosphoserine is present on S188. Residues 219 to 228 (LSGMVHGEYQ) are G5. Disordered regions lie at residues 397-557 (DSKP…ANCQ) and 575-667 (PTFD…ALKW). Glycyl lysine isopeptide (Lys-Gly) (interchain with G-Cter in SUMO2) cross-links involve residues K399 and K415. Composition is skewed to acidic residues over residues 434 to 472 (GDEDESGDSDDEEDDEMSEDDGLENGSSDEEAEEEENAE) and 503 to 531 (DSDDDLERSSAEEGEAEEADESSEEEDCT). Positions 535–550 (KGISGSKAAGEGSKAG) are enriched in low complexity. The residue at position 552 (S552) is a Phosphoserine. Residues 588 to 610 (FASEDESEESSSLSAEEEDSENE) are compositionally biased toward acidic residues. A phosphoserine mark is found at S625 and S639. A Glycyl lysine isopeptide (Lys-Gly) (interchain with G-Cter in SUMO2) cross-link involves residue K646. Positions 653-667 (EENNDSKETSGALKW) are enriched in basic and acidic residues. T708 carries the post-translational modification Phosphothreonine. Disordered regions lie at residues 787-822 (ETGDVHKGKSGPNTQNEDIEKEVKEEIDPDEEESAK) and 1178-1202 (NKPKTQAKAGKVPKDRRRPAVIREP). Residue K810 forms a Glycyl lysine isopeptide (Lys-Gly) (interchain with G-Cter in SUMO1); alternate linkage. A Glycyl lysine isopeptide (Lys-Gly) (interchain with G-Cter in SUMO2); alternate cross-link involves residue K810. A Glycyl lysine isopeptide (Lys-Gly) (interchain with G-Cter in SUMO2) cross-link involves residue K1206. A disordered region spans residues 1219–1282 (SQKMKKAKEQ…SLKGAEGQLQ (64 aa)). Basic and acidic residues predominate over residues 1228–1248 (QRHLHNKEHFRAKQKEEEEKL). The span at 1249 to 1259 (KRQKDLRKKLF) shows a compositional bias: basic residues.

This sequence belongs to the TRAFAC class translation factor GTPase superfamily. Bms1-like GTPase family. BMS1 subfamily. As to quaternary structure, part of the small subunit (SSU) processome, composed of more than 70 proteins and the RNA chaperone small nucleolar RNA (snoRNA) U3. Interacts with RCL1.

It localises to the nucleus. The protein localises to the nucleolus. The catalysed reaction is GTP + H2O = GDP + phosphate + H(+). Functionally, GTPase required for the synthesis of 40S ribosomal subunits and for processing of pre-ribosomal RNA (pre-rRNA) at sites A0, A1, and A2. Controls access of pre-rRNA intermediates to RCL1 during ribosome biogenesis by binding RCL1 in a GTP-dependent manner, and delivering it to pre-ribosomes. GTP-binding and/or GTP hydrolysis may induce conformational rearrangements within the BMS1-RCL1 complex allowing the interaction of RCL1 with its RNA substrate. Required for RCL1 import into the nucleus. In Homo sapiens (Human), this protein is Ribosome biogenesis protein BMS1 homolog.